Here is a 61-residue protein sequence, read N- to C-terminus: UPF0391 membrane protein Pnap_0032 (61 aa).

The next 2 helical transmembrane spans lie at 5–25 and 33–53; these read AIIFAVISLIAGALGFSGVAA and VLFGLFLILAVIFIVLAALGV.

The protein belongs to the UPF0391 family.

It is found in the cell membrane. The chain is UPF0391 membrane protein Pnap_0032 from Polaromonas naphthalenivorans (strain CJ2).